Reading from the N-terminus, the 260-residue chain is Putative enoyl-CoA hydratase/isomerase YngF (260 aa).

It belongs to the enoyl-CoA hydratase/isomerase family.

This Bacillus subtilis (strain 168) protein is Putative enoyl-CoA hydratase/isomerase YngF (yngF).